A 235-amino-acid chain; its full sequence is Large ribosomal subunit protein uL1 (235 aa).

The protein belongs to the universal ribosomal protein uL1 family. As to quaternary structure, part of the 50S ribosomal subunit.

Functionally, binds directly to 23S rRNA. The L1 stalk is quite mobile in the ribosome, and is involved in E site tRNA release. Protein L1 is also a translational repressor protein, it controls the translation of the L11 operon by binding to its mRNA. This Synechococcus sp. (strain CC9605) protein is Large ribosomal subunit protein uL1.